Here is a 689-residue protein sequence, read N- to C-terminus: Glycine--tRNA ligase beta subunit (689 aa).

This sequence belongs to the class-II aminoacyl-tRNA synthetase family. Tetramer of two alpha and two beta subunits.

It localises to the cytoplasm. The enzyme catalyses tRNA(Gly) + glycine + ATP = glycyl-tRNA(Gly) + AMP + diphosphate. This chain is Glycine--tRNA ligase beta subunit, found in Edwardsiella ictaluri (strain 93-146).